The following is a 162-amino-acid chain: uncharacterized protein (162 aa).

The first 24 residues, 1–24, serve as a signal peptide directing secretion; sequence MCKRFKFLLAVSALFISITVVLAG. C25 carries N-palmitoyl cysteine lipidation. Residue C25 is the site of S-diacylglycerol cysteine attachment.

It is found in the cell membrane. This is an uncharacterized protein from Bacillus anthracis.